An 802-amino-acid chain; its full sequence is Leucine--tRNA ligase (802 aa).

The short motif at 40–51 (PYPSGAGLHVGH) is the 'HIGH' region element. A 'KMSKS' region motif is present at residues 576–580 (KMSKS). Residue Lys579 participates in ATP binding.

It belongs to the class-I aminoacyl-tRNA synthetase family.

The protein resides in the cytoplasm. The catalysed reaction is tRNA(Leu) + L-leucine + ATP = L-leucyl-tRNA(Leu) + AMP + diphosphate. In Bacillus cereus (strain ATCC 14579 / DSM 31 / CCUG 7414 / JCM 2152 / NBRC 15305 / NCIMB 9373 / NCTC 2599 / NRRL B-3711), this protein is Leucine--tRNA ligase.